The primary structure comprises 2156 residues: MAM and LDL-receptor class A domain-containing protein 1 (2156 aa).

The N-terminal stretch at 1–31 (MLFFLDRMLAFPMNETFCCLWIACVFNSTLA) is a signal peptide. Over 32–2076 (QQGTESFQCD…FTYAQNNTWT (2045 aa)) the chain is Vesicular. Residues 33–68 (QGTESFQCDNGVSLPPDSICDFTDQCGDSSDERHCL) enclose the LDL-receptor class A 1 domain. 2 cysteine pairs are disulfide-bonded: Cys40-Cys58 and Cys52-Cys67. 2 MAM domains span residues 71-229 (ERCD…GCLP) and 268-427 (QACG…ACGQ). Residues 433-471 (LCSADEFPCTSGQCIAKESVCDSRQDCSDESDEDPATCS) enclose the LDL-receptor class A 2 domain. Intrachain disulfides connect Cys434/Cys446, Cys441/Cys459, and Cys453/Cys470. MAM domains lie at 474–637 (LTCD…ECEI) and 652–816 (SKCD…NCTL). An N-linked (GlcNAc...) asparagine glycan is attached at Asn813. Positions 822 to 860 (SCEGLDHFWCRHTRACIEKLRLCDLVDDCGDRTDEVNCA) constitute an LDL-receptor class A 3 domain. 3 disulfides stabilise this stretch: Cys823/Cys837, Cys831/Cys850, and Cys844/Cys859. The MAM 5 domain occupies 863–1024 (LQCNFETGIC…DDLSFMDCTL (162 aa)). Asn1049 carries N-linked (GlcNAc...) asparagine glycosylation. The LDL-receptor class A 4 domain maps to 1049–1086 (NCTDNEFICRSDGHCIEKMQKCDFKYDCPDKSDEASCV). 3 disulfides stabilise this stretch: Cys1050–Cys1063, Cys1057–Cys1076, and Cys1070–Cys1085. An MAM 6 domain is found at 1088 to 1256 (EVCSFEKRSL…DDISFQDCSP (169 aa)). The N-linked (GlcNAc...) asparagine glycan is linked to Asn1199. Residues 1263–1301 (KCTDHEFMCANKHCIAKDKLCDFVNDCADNSDETTFICR) enclose the LDL-receptor class A 5 domain. Cystine bridges form between Cys1264/Cys1276, Cys1271/Cys1289, and Cys1283/Cys1300. The MAM 7 domain occupies 1305–1465 (GRCDFEFDLC…DIVLTENCLS (161 aa)). A glycan (N-linked (GlcNAc...) asparagine) is linked at Asn1414. An LDL-receptor class A 6 domain is found at 1482–1518 (FCPLGYRECHNGKCYRLEQSCNFVDNCGDNTDENECG). Cystine bridges form between Cys1483-Cys1495, Cys1490-Cys1508, and Cys1502-Cys1517. An MAM 8 domain is found at 1519–1676 (SSCTFEKGWC…DDIEFKNCTT (158 aa)). Positions 1683–1720 (LCPEITDFLCRDKKCIASHLLCDYKPDCSDRSDEAHCA) constitute an LDL-receptor class A 7 domain. Cystine bridges form between Cys1684–Cys1697, Cys1692–Cys1710, and Cys1704–Cys1719. An MAM 9 domain is found at 1727–1892 (GSCNFETSSG…DISFTPECVT (166 aa)). 3 consecutive LDL-receptor class A domains span residues 1902–1939 (PCEA…MDCP), 1946–1982 (LCSN…LICS), and 1985–2023 (SCSN…SSCS). 12 disulfides stabilise this stretch: Cys1903/Cys1916, Cys1910/Cys1929, Cys1923/Cys1938, Cys1947/Cys1959, Cys1954/Cys1972, Cys1966/Cys1981, Cys1986/Cys1999, Cys1993/Cys2012, Cys2006/Cys2022, Cys2025/Cys2036, Cys2030/Cys2045, and Cys2047/Cys2056. One can recognise an EGF-like domain in the interval 2024–2057 (ECPLNYCRNGGTCVVEKNGPMCRCRQGWKGNRCH). A helical membrane pass occupies residues 2077–2097 (LLGIGLAFLMTHITVAVLCFL). Topologically, residues 2098–2156 (ANRKVPIRKTEGSGNCAFVNPVYGNWSNPEKTESSVYSFSNPLYGTTSGSLETLSHHLK) are cytoplasmic.

Interacts with FGF19. As to expression, strongly expressed in the small intestine.

Its subcellular location is the cytoplasmic vesicle membrane. Its function is as follows. Enhances production and/or transport of FGF19 and thus has a role in regulation of bile acid synthesis. This is MAM and LDL-receptor class A domain-containing protein 1 from Homo sapiens (Human).